Consider the following 474-residue polypeptide: Probable phenylalanine--tRNA ligase alpha subunit (474 aa).

Positions 1-150 are contains the major tRNA-Phe binding sites; that stretch reads MSLSQKILEL…KRKLIYQAKE (150 aa). L-phenylalanine-binding positions include Thr-308, 350-352, and Tyr-390; that span reads QVE. Glu-392 provides a ligand contact to Mg(2+). An L-phenylalanine-binding site is contributed by Phe-416.

This sequence belongs to the class-II aminoacyl-tRNA synthetase family. Phe-tRNA synthetase alpha subunit type 2 subfamily. As to quaternary structure, tetramer of two alpha and two beta subunits. Mg(2+) is required as a cofactor.

It localises to the cytoplasm. It carries out the reaction tRNA(Phe) + L-phenylalanine + ATP = L-phenylalanyl-tRNA(Phe) + AMP + diphosphate + H(+). This is Probable phenylalanine--tRNA ligase alpha subunit from Vairimorpha ceranae (strain BRL01) (Microsporidian parasite).